A 347-amino-acid chain; its full sequence is MKMEEMSLSGLDNSKLEAIAQEIYADLVEDSCLGFCFEVHRAVKCGYFFLDDTDPDSMKDFEIVDQPGLDIFGQVFNQWKSKECVCPNCSRSIAASRFAPHLEKCLGMGRNSSRIANRRIANSNNMNKSESDQEDNDDINDNDWSYGSEKKAKKRKSDKNPNSPRRSKSLKHKNGELSNSDPFKYNNSTGISYETLGPEELRSLLTTQCGVISEHTKKMCTRSLRCPQHTDEQRRTVRIYFLGPSAVLPEVESSLDNDSFDMTDSQALISRLQWDGSSDLSPSDSGSSKTSENQGWGLGTNSSESRKTKKKKSHLSLVGTASGLGSNKKKKPKPPAPPTPSIYDDIN.

The segment at 84-105 (CVCPNCSRSIAASRFAPHLEKC) adopts an SGF11-type zinc-finger fold. Low complexity predominate over residues 116–125 (ANRRIANSNN). The disordered stretch occupies residues 116–184 (ANRRIANSNN…GELSNSDPFK (69 aa)). Residues serine 129 and serine 131 each carry the phosphoserine modification. Residues 132–141 (DQEDNDDIND) are compositionally biased toward acidic residues. The SCA7 domain maps to 196-263 (LGPEELRSLL…SLDNDSFDMT (68 aa)). Low complexity predominate over residues 275–288 (DGSSDLSPSDSGSS). Residues 275–347 (DGSSDLSPSD…PTPSIYDDIN (73 aa)) form a disordered region. 3 positions are modified to phosphoserine: serine 278, serine 281, and serine 326.

It belongs to the SGF11 family. In terms of assembly, component of some SAGA transcription coactivator-HAT complexes, at least composed of ATXN7, ATXN7L3, ENY2, GCN5L2, SUPT3H, TAF10, TRRAP and USP22. Within the SAGA complex, ENY2, ATXN7, ATXN7L3, and USP22 form an additional subcomplex of SAGA called the DUB module (deubiquitination module). Interacts directly with ENY2 and USP22.

The protein localises to the nucleus. Its function is as follows. Component of the transcription regulatory histone acetylation (HAT) complex SAGA, a multiprotein complex that activates transcription by remodeling chromatin and mediating histone acetylation and deubiquitination. Within the SAGA complex, participates in a subcomplex that specifically deubiquitinates both histones H2A and H2B. The SAGA complex is recruited to specific gene promoters by activators such as MYC, where it is required for transcription. Required for nuclear receptor-mediated transactivation. Within the complex, it is required to recruit USP22 and ENY2 into the SAGA complex. Regulates H2B monoubiquitination (H2Bub1) levels. Affects subcellular distribution of ENY2, USP22 and ATXN7L3B. The polypeptide is Ataxin-7-like protein 3 (Homo sapiens (Human)).